The chain runs to 645 residues: Chaperone protein DnaK (645 aa).

Residue Thr-201 is modified to Phosphothreonine; by autocatalysis. Residues Asn-606–Ser-629 show a composition bias toward low complexity. The tract at residues Asn-606–Lys-645 is disordered. Positions Lys-630 to Lys-645 are enriched in basic and acidic residues.

This sequence belongs to the heat shock protein 70 family.

In terms of biological role, acts as a chaperone. The chain is Chaperone protein DnaK from Ehrlichia ruminantium (strain Gardel).